The chain runs to 250 residues: uncharacterized protein (250 aa).

Residues serine 15, leucine 17, aspartate 36, aspartate 56, valine 57, and cysteine 82 each coordinate NAD(+). Serine 143 provides a ligand contact to substrate. Residues tyrosine 156, lysine 160, phenylalanine 189, and threonine 191 each contribute to the NAD(+) site. The active-site Proton acceptor is the tyrosine 156.

Belongs to the short-chain dehydrogenases/reductases (SDR) family.

This is an uncharacterized protein from Mycobacterium tuberculosis (strain CDC 1551 / Oshkosh).